A 56-amino-acid chain; its full sequence is MAKGSTIKIGLKCSECGDINYSTTKNAKTNTEKLELKKFSPRLNKHTIHKEVKLKS.

It belongs to the bacterial ribosomal protein bL33 family.

The sequence is that of Large ribosomal subunit protein bL33 from Helicobacter hepaticus (strain ATCC 51449 / 3B1).